We begin with the raw amino-acid sequence, 234 residues long: Triosephosphate isomerase (234 aa).

Substrate is bound at residue 8–10; sequence NFK. Histidine 90 serves as the catalytic Electrophile. Glutamate 159 (proton acceptor) is an active-site residue. Residues glycine 165, serine 197, and 218–219 contribute to the substrate site; that span reads GS.

In terms of assembly, homodimer.

Its subcellular location is the cytoplasm. It carries out the reaction D-glyceraldehyde 3-phosphate = dihydroxyacetone phosphate. It functions in the pathway carbohydrate biosynthesis; gluconeogenesis. The protein operates within carbohydrate degradation; glycolysis; D-glyceraldehyde 3-phosphate from glycerone phosphate: step 1/1. In terms of biological role, involved in the gluconeogenesis. Catalyzes stereospecifically the conversion of dihydroxyacetone phosphate (DHAP) to D-glyceraldehyde-3-phosphate (G3P). In Helicobacter pylori (strain ATCC 700392 / 26695) (Campylobacter pylori), this protein is Triosephosphate isomerase.